A 338-amino-acid chain; its full sequence is Ketol-acid reductoisomerase (NADP(+)) (338 aa).

The 181-residue stretch at 1-181 (MHVYYDKDCD…GGGRTGIIET (181 aa)) folds into the KARI N-terminal Rossmann domain. Residues 24–27 (YGSQ), Arg-47, Ser-50, Thr-52, and 82–85 (DEFQ) contribute to the NADP(+) site. His-107 is an active-site residue. Gly-133 contributes to the NADP(+) binding site. One can recognise a KARI C-terminal knotted domain in the interval 182–327 (TFKDETETDL…AKLRAMMPWI (146 aa)). Mg(2+) is bound by residues Asp-190, Glu-194, Glu-226, and Glu-230. Ser-251 lines the substrate pocket.

It belongs to the ketol-acid reductoisomerase family. It depends on Mg(2+) as a cofactor.

It catalyses the reaction (2R)-2,3-dihydroxy-3-methylbutanoate + NADP(+) = (2S)-2-acetolactate + NADPH + H(+). It carries out the reaction (2R,3R)-2,3-dihydroxy-3-methylpentanoate + NADP(+) = (S)-2-ethyl-2-hydroxy-3-oxobutanoate + NADPH + H(+). The protein operates within amino-acid biosynthesis; L-isoleucine biosynthesis; L-isoleucine from 2-oxobutanoate: step 2/4. Its pathway is amino-acid biosynthesis; L-valine biosynthesis; L-valine from pyruvate: step 2/4. Involved in the biosynthesis of branched-chain amino acids (BCAA). Catalyzes an alkyl-migration followed by a ketol-acid reduction of (S)-2-acetolactate (S2AL) to yield (R)-2,3-dihydroxy-isovalerate. In the isomerase reaction, S2AL is rearranged via a Mg-dependent methyl migration to produce 3-hydroxy-3-methyl-2-ketobutyrate (HMKB). In the reductase reaction, this 2-ketoacid undergoes a metal-dependent reduction by NADPH to yield (R)-2,3-dihydroxy-isovalerate. This is Ketol-acid reductoisomerase (NADP(+)) from Cellvibrio japonicus (strain Ueda107) (Pseudomonas fluorescens subsp. cellulosa).